Consider the following 116-residue polypeptide: Large ribosomal subunit protein bL17 (116 aa).

Belongs to the bacterial ribosomal protein bL17 family. Part of the 50S ribosomal subunit. Contacts protein L32.

This chain is Large ribosomal subunit protein bL17, found in Synechocystis sp. (strain ATCC 27184 / PCC 6803 / Kazusa).